The following is a 255-amino-acid chain: Ribonuclease HII (255 aa).

The region spanning 72-255 (AIICGIDEVG…KSFEPIKSLL (184 aa)) is the RNase H type-2 domain. 3 residues coordinate a divalent metal cation: Asp-78, Glu-79, and Asp-170.

It belongs to the RNase HII family. Mn(2+) is required as a cofactor. Requires Mg(2+) as cofactor.

Its subcellular location is the cytoplasm. It catalyses the reaction Endonucleolytic cleavage to 5'-phosphomonoester.. Functionally, endonuclease that specifically degrades the RNA of RNA-DNA hybrids. The polypeptide is Ribonuclease HII (Staphylococcus aureus (strain MRSA252)).